Reading from the N-terminus, the 383-residue chain is tRNA-specific 2-thiouridylase MnmA (383 aa).

Residues 10–17 (AMSGGVDS) and Met36 each bind ATP. Cys107 functions as the Nucleophile in the catalytic mechanism. An intrachain disulfide couples Cys107 to Cys206. An ATP-binding site is contributed by Gly131. The segment at 155–157 (KDQ) is interaction with tRNA. Cys206 (cysteine persulfide intermediate) is an active-site residue. Residues 315–316 (RY) form an interaction with tRNA region.

The protein belongs to the MnmA/TRMU family.

The protein localises to the cytoplasm. It catalyses the reaction S-sulfanyl-L-cysteinyl-[protein] + uridine(34) in tRNA + AH2 + ATP = 2-thiouridine(34) in tRNA + L-cysteinyl-[protein] + A + AMP + diphosphate + H(+). In terms of biological role, catalyzes the 2-thiolation of uridine at the wobble position (U34) of tRNA, leading to the formation of s(2)U34. This Salinibacter ruber (strain DSM 13855 / M31) protein is tRNA-specific 2-thiouridylase MnmA.